A 245-amino-acid polypeptide reads, in one-letter code: NAD(P)H-hydrate epimerase (245 aa).

In terms of domain architecture, YjeF N-terminal spans 21–221 (MREIDRLAVQ…DLGIPPAVYT (201 aa)). 72–76 (GNGGG) contacts (6S)-NADPHX. K(+) is bound by residues N73 and D135. (6S)-NADPHX-binding positions include 139 to 145 (GYSLLGA) and D168. S171 is a K(+) binding site.

This sequence belongs to the NnrE/AIBP family. The cofactor is K(+).

It carries out the reaction (6R)-NADHX = (6S)-NADHX. It catalyses the reaction (6R)-NADPHX = (6S)-NADPHX. In terms of biological role, catalyzes the epimerization of the S- and R-forms of NAD(P)HX, a damaged form of NAD(P)H that is a result of enzymatic or heat-dependent hydration. This is a prerequisite for the S-specific NAD(P)H-hydrate dehydratase to allow the repair of both epimers of NAD(P)HX. This Dehalogenimonas lykanthroporepellens (strain ATCC BAA-1523 / JCM 15061 / BL-DC-9) protein is NAD(P)H-hydrate epimerase.